We begin with the raw amino-acid sequence, 151 residues long: Probable cGMP 3',5'-cyclic phosphodiesterase subunit delta (151 aa).

It belongs to the PDE6D/unc-119 family. As to quaternary structure, interacts with Pde6.

Its subcellular location is the nucleus. It localises to the cytoplasm. The chain is Probable cGMP 3',5'-cyclic phosphodiesterase subunit delta from Drosophila simulans (Fruit fly).